Consider the following 229-residue polypeptide: Protein TraJ (229 aa).

It localises to the cytoplasm. In terms of biological role, this protein is essential for positively regulating the expression of transfer genes that are involved in the conjugal transfer of DNA between bacterial cells. The protein is Protein TraJ (traJ) of Escherichia coli (strain K12).